Reading from the N-terminus, the 110-residue chain is U1-lycotoxin-Ls1cc (110 aa).

Residues 1-20 form the signal peptide; it reads MKFVLLFGVLLVTLFSYSSA. Positions 21–44 are excised as a propeptide; that stretch reads EMLDDFDQADEDELLSLIEKEEAR. Disulfide bonds link C47-C62, C54-C71, C61-C89, and C73-C87.

This sequence belongs to the neurotoxin 19 (CSTX) family. 03 subfamily. As to expression, expressed by the venom gland.

The protein resides in the secreted. In Lycosa singoriensis (Wolf spider), this protein is U1-lycotoxin-Ls1cc.